The chain runs to 642 residues: tRNA uridine 5-carboxymethylaminomethyl modification enzyme MnmG (642 aa).

Residues glycine 10–glycine 15, valine 122, and serine 177 contribute to the FAD site. Serine 269 to phenylalanine 283 contributes to the NAD(+) binding site. Residue glutamine 366 coordinates FAD.

The protein belongs to the MnmG family. In terms of assembly, homodimer. Heterotetramer of two MnmE and two MnmG subunits. FAD is required as a cofactor.

It is found in the cytoplasm. Its function is as follows. NAD-binding protein involved in the addition of a carboxymethylaminomethyl (cmnm) group at the wobble position (U34) of certain tRNAs, forming tRNA-cmnm(5)s(2)U34. The polypeptide is tRNA uridine 5-carboxymethylaminomethyl modification enzyme MnmG (Syntrophobacter fumaroxidans (strain DSM 10017 / MPOB)).